Here is a 48-residue protein sequence, read N- to C-terminus: Protein PsbN (48 aa).

The helical transmembrane segment at 12-34 (LLIAMVTITFGLTGYGLYTAFGP) threads the bilayer.

This sequence belongs to the PsbN family.

The protein localises to the cellular thylakoid membrane. Its function is as follows. May play a role in photosystem I and II biogenesis. The chain is Protein PsbN from Prochlorococcus marinus (strain MIT 9313).